A 220-amino-acid polypeptide reads, in one-letter code: Large ribosomal subunit protein bL9 (220 aa).

Over residues A167 to D184 the composition is skewed to low complexity. A disordered region spans residues A167–T220.

It belongs to the bacterial ribosomal protein bL9 family.

Its function is as follows. Binds to the 23S rRNA. The protein is Large ribosomal subunit protein bL9 of Anaplasma marginale (strain St. Maries).